Here is a 140-residue protein sequence, read N- to C-terminus: Protein archease (140 aa).

Residues D12, D139, and L140 each contribute to the Ca(2+) site.

Belongs to the archease family.

Functionally, activates the tRNA-splicing ligase complex by facilitating the enzymatic turnover of catalytic subunit RtcB. Acts by promoting the guanylylation of RtcB, a key intermediate step in tRNA ligation. Can also alter the NTP specificity of RtcB such that ATP, dGTP or ITP is used efficiently. May also act as a chaperone or modulator of proteins involved in DNA or RNA processing. The sequence is that of Protein archease from Methanothermobacter thermautotrophicus (strain ATCC 29096 / DSM 1053 / JCM 10044 / NBRC 100330 / Delta H) (Methanobacterium thermoautotrophicum).